A 310-amino-acid polypeptide reads, in one-letter code: Low-salt glycan biosynthesis protein Agl12 (310 aa).

Residues 7-13 (GGAGFIG), 32-35 (DALT), and 58-59 (DI) each bind NAD(+). Residue S82 participates in substrate binding. T97 is a binding site for NAD(+). Residues T122 and 122 to 124 (TDE) contribute to the substrate site. D123 serves as the catalytic Proton donor. Catalysis depends on proton acceptor residues E124 and Y146. 146–150 (YSATK) is a binding site for NAD(+). Substrate is bound at residue N175. An NAD(+)-binding site is contributed by N176. Substrate is bound by residues 185-186 (KL), 201-203 (PVY), R210, N245, and 269-272 (RAGH).

This sequence belongs to the NAD(P)-dependent epimerase/dehydratase family. dTDP-glucose dehydratase subfamily. It depends on NAD(+) as a cofactor.

The protein operates within protein modification; protein glycosylation. Its pathway is cell surface structure biogenesis; S-layer biogenesis. In terms of biological role, lyase involved in N-glycan biosynthetic pathway that takes place under low-salt conditions (1.75 M instead of 3.4 M). Participates in the formation of the tetrasaccharide present at 'Asn-532' of S-layer glycoprotein Csg, consisting of a sulfated hexose, 2 hexoses and rhamnose. Involved in the addition of final rhamnose (sugar 4) of the tetrasaccharide on the dolichol phosphate carrier. In Haloferax volcanii (strain ATCC 29605 / DSM 3757 / JCM 8879 / NBRC 14742 / NCIMB 2012 / VKM B-1768 / DS2) (Halobacterium volcanii), this protein is Low-salt glycan biosynthesis protein Agl12 (agl12).